An 842-amino-acid chain; its full sequence is Alpha-glucan phosphorylase, H isozyme (842 aa).

At Lys-688 the chain carries N6-(pyridoxal phosphate)lysine.

It belongs to the glycogen phosphorylase family. It depends on pyridoxal 5'-phosphate as a cofactor.

It is found in the cytoplasm. The enzyme catalyses [(1-&gt;4)-alpha-D-glucosyl](n) + phosphate = [(1-&gt;4)-alpha-D-glucosyl](n-1) + alpha-D-glucose 1-phosphate. Phosphorylase is an important allosteric enzyme in carbohydrate metabolism. Enzymes from different sources differ in their regulatory mechanisms and in their natural substrates. However, all known phosphorylases share catalytic and structural properties. Its function is as follows. The H isoform exhibits higher affinity for branched polyglucans such as soluble starch or glycogen. This is Alpha-glucan phosphorylase, H isozyme from Vicia faba (Broad bean).